Here is a 753-residue protein sequence, read N- to C-terminus: Probable phosphoenolpyruvate synthase (753 aa).

Residue histidine 398 is the Tele-phosphohistidine intermediate of the active site. Positions 488, 535, 631, 653, 654, 655, and 656 each coordinate substrate. A Mg(2+)-binding site is contributed by glutamate 631. A Mg(2+)-binding site is contributed by aspartate 656. Cysteine 703 functions as the Proton donor in the catalytic mechanism.

Belongs to the PEP-utilizing enzyme family. It depends on Mg(2+) as a cofactor.

It catalyses the reaction pyruvate + ATP + H2O = phosphoenolpyruvate + AMP + phosphate + 2 H(+). Its pathway is carbohydrate biosynthesis; gluconeogenesis. In terms of biological role, catalyzes the phosphorylation of pyruvate to phosphoenolpyruvate. The chain is Probable phosphoenolpyruvate synthase (ppsA) from Archaeoglobus fulgidus (strain ATCC 49558 / DSM 4304 / JCM 9628 / NBRC 100126 / VC-16).